Consider the following 436-residue polypeptide: Gustatory receptor for sugar taste 61a (436 aa).

Residues 1–78 (MSRTSDDIRK…PQDVKFKVRS (78 aa)) lie on the Cytoplasmic side of the membrane. The chain crosses the membrane as a helical span at residues 79 to 99 (IGLAVTGLFLLLGGMKTLVGA). The Extracellular segment spans residues 100–111 (NILFTEGLNAKN). Residues 112–132 (IVGLVFLIVGMVNWLNFVGFA) form a helical membrane-spanning segment. Topologically, residues 133–164 (RSWSHIMLPWSSVDILMLFPPYKRGKRSLRSK) are cytoplasmic. A helical transmembrane segment spans residues 165-185 (VNVLALSVVVLAVGDHMLYYA). Over 186 to 214 (SGYCSYSMHILQCHTNHSRITFGLYLEKE) the chain is Extracellular. N-linked (GlcNAc...) asparagine glycosylation is present at Asn-201. The chain crosses the membrane as a helical span at residues 215–235 (FSDIMFIMPFNIFSMCYGFWL). The Cytoplasmic portion of the chain corresponds to 236-237 (NG). The helical transmembrane segment at 238–258 (AFTFLWNFMDIFIVMTSIGLA) threads the bilayer. At 259–304 (QRFQQFAARVGALEGRHVPEALWYDIRRDHIRLCELASLVEASMSN) the chain is on the extracellular side. A helical membrane pass occupies residues 305–325 (IVFVSCANNVYVICNQALAIF). Topologically, residues 326–334 (TKLRHPINY) are cytoplasmic. A helical transmembrane segment spans residues 335–355 (VYFWYSLIFLLARTSLVFMTA). The Extracellular segment spans residues 356–436 (SKIHDASLLP…AKSHKGLRCA (81 aa)).

Belongs to the insect chemoreceptor superfamily. Gustatory receptor (GR) family. Gr5a subfamily. Expressed in sweet sensing neurons of classical chemosensory sensilla, but also in two supersensitive neurons of atypical taste sensilla.

It is found in the cell membrane. Its function is as follows. One of the few identified sugar gustatory receptors identified so far with glucose being its primary ligand and which mediates acceptance behavior. The protein is Gustatory receptor for sugar taste 61a (Gr61a) of Drosophila melanogaster (Fruit fly).